The primary structure comprises 207 residues: Holliday junction branch migration complex subunit RuvA (207 aa).

The tract at residues 1 to 63 (MISSLRGTVL…EDSLQLFGFS (63 aa)) is domain I. The domain II stretch occupies residues 64–142 (GLEQLQVFEL…ACRRPSAPSA (79 aa)). A flexible linker region spans residues 142 to 146 (ARRPS). The domain III stretch occupies residues 147–207 (APSSVSDSVL…RLGPANQAAR (61 aa)).

The protein belongs to the RuvA family. As to quaternary structure, homotetramer. Forms an RuvA(8)-RuvB(12)-Holliday junction (HJ) complex. HJ DNA is sandwiched between 2 RuvA tetramers; dsDNA enters through RuvA and exits via RuvB. An RuvB hexamer assembles on each DNA strand where it exits the tetramer. Each RuvB hexamer is contacted by two RuvA subunits (via domain III) on 2 adjacent RuvB subunits; this complex drives branch migration. In the full resolvosome a probable DNA-RuvA(4)-RuvB(12)-RuvC(2) complex forms which resolves the HJ.

It is found in the cytoplasm. Functionally, the RuvA-RuvB-RuvC complex processes Holliday junction (HJ) DNA during genetic recombination and DNA repair, while the RuvA-RuvB complex plays an important role in the rescue of blocked DNA replication forks via replication fork reversal (RFR). RuvA specifically binds to HJ cruciform DNA, conferring on it an open structure. The RuvB hexamer acts as an ATP-dependent pump, pulling dsDNA into and through the RuvAB complex. HJ branch migration allows RuvC to scan DNA until it finds its consensus sequence, where it cleaves and resolves the cruciform DNA. The protein is Holliday junction branch migration complex subunit RuvA of Leifsonia xyli subsp. xyli (strain CTCB07).